The chain runs to 178 residues: Acireductone dioxygenase (178 aa).

Fe(2+) contacts are provided by His-81, His-83, Glu-87, and His-126. Ni(2+) contacts are provided by His-81, His-83, Glu-87, and His-126.

Belongs to the acireductone dioxygenase (ARD) family. It depends on Fe(2+) as a cofactor. Requires Ni(2+) as cofactor.

It is found in the cytoplasm. The protein localises to the nucleus. It carries out the reaction 1,2-dihydroxy-5-(methylsulfanyl)pent-1-en-3-one + O2 = 4-methylsulfanyl-2-oxobutanoate + formate + 2 H(+). The catalysed reaction is 1,2-dihydroxy-5-(methylsulfanyl)pent-1-en-3-one + O2 = 3-(methylsulfanyl)propanoate + CO + formate + 2 H(+). The protein operates within amino-acid biosynthesis; L-methionine biosynthesis via salvage pathway; L-methionine from S-methyl-5-thio-alpha-D-ribose 1-phosphate: step 5/6. Its function is as follows. Catalyzes 2 different reactions between oxygen and the acireductone 1,2-dihydroxy-3-keto-5-methylthiopentene (DHK-MTPene) depending upon the metal bound in the active site. Fe-containing acireductone dioxygenase (Fe-ARD) produces formate and 2-keto-4-methylthiobutyrate (KMTB), the alpha-ketoacid precursor of methionine in the methionine recycle pathway. Ni-containing acireductone dioxygenase (Ni-ARD) produces methylthiopropionate, carbon monoxide and formate, and does not lie on the methionine recycle pathway. The protein is Acireductone dioxygenase (adi1) of Neurospora crassa (strain ATCC 24698 / 74-OR23-1A / CBS 708.71 / DSM 1257 / FGSC 987).